The sequence spans 353 residues: MKSTFGLLALAAAAKMAHAHATVQAIWINGVDQGAGNSASGYIRSPPNNSPLVDVTSADMTCNVNGKNPVAKTLPVKAGDKITFEWHHTDRSPSDDIIASSHRGPIMVYMAPTAKGAAGNGWVKIAEEGYSNGKWAVDNLIANRGKHSIVVPDVPAGDYLFRPEIIALHEGNRLGGAQFYMECVQVKVTSNGANALPAGVSIPGAYKATDPGVHFDIYNSFSSYPMPGPAVWNGASAAGSAPAPTAAPTQKPVVTAAPTTLATLVKPTTTTAAAPAETDSCDGDDDDYETETPAPQASATQAPAPQRPAPQTPSGSVKEWYQCGGINYTGAKNCESGLVCKEWNPYYHQCIKA.

The signal sequence occupies residues 1–19 (MKSTFGLLALAAAAKMAHA). Cu(2+) contacts are provided by histidine 20 and histidine 102. Cysteine 62 and cysteine 183 are disulfide-bonded. Residue histidine 169 coordinates O2. Cu(2+) is bound at residue tyrosine 180. A compositionally biased stretch (low complexity) spans 266–276 (KPTTTTAAAPA). Residues 266 to 316 (KPTTTTAAAPAETDSCDGDDDDYETETPAPQASATQAPAPQRPAPQTPSGS) are disordered. Over residues 279–290 (DSCDGDDDDYET) the composition is skewed to acidic residues. Over residues 291–304 (ETPAPQASATQAPA) the composition is skewed to low complexity. The region spanning 315–351 (GSVKEWYQCGGINYTGAKNCESGLVCKEWNPYYHQCI) is the CBM1 domain. N-linked (GlcNAc...) asparagine glycosylation occurs at asparagine 327.

This sequence belongs to the polysaccharide monooxygenase AA9 family. Cu(2+) is required as a cofactor.

It is found in the secreted. The catalysed reaction is [(1-&gt;4)-beta-D-glucosyl]n+m + reduced acceptor + O2 = 4-dehydro-beta-D-glucosyl-[(1-&gt;4)-beta-D-glucosyl]n-1 + [(1-&gt;4)-beta-D-glucosyl]m + acceptor + H2O.. Lytic polysaccharide monooxygenase (LPMO) that depolymerizes crystalline and amorphous polysaccharides via the oxidation of scissile alpha- or beta-(1-4)-glycosidic bonds, yielding C4 oxidation products. Catalysis by LPMOs requires the reduction of the active-site copper from Cu(II) to Cu(I) by a reducing agent and H(2)O(2) or O(2) as a cosubstrate. The chain is AA9 family lytic polysaccharide monooxygenase A (eglD) from Aspergillus clavatus (strain ATCC 1007 / CBS 513.65 / DSM 816 / NCTC 3887 / NRRL 1 / QM 1276 / 107).